A 347-amino-acid polypeptide reads, in one-letter code: NADH-ubiquinone oxidoreductase chain 2 (347 aa).

11 consecutive transmembrane segments (helical) span residues 3 to 23 (PMTS…VLMS), 25 to 45 (HWFM…PILM), 59 to 79 (YFLT…INLM), 96 to 116 (TLIT…FWVP), 122 to 142 (VSLS…LSLL), 149 to 169 (INTN…GWGG), 178 to 198 (IMAY…IYNP), 200 to 220 (LSLL…MLLI), 240 to 260 (ITTM…LTGF), 274 to 294 (NSVI…FFYM), and 326 to 346 (MTML…FISL).

This sequence belongs to the complex I subunit 2 family. As to quaternary structure, core subunit of respiratory chain NADH dehydrogenase (Complex I) which is composed of 45 different subunits. Interacts with TMEM242.

The protein localises to the mitochondrion inner membrane. It catalyses the reaction a ubiquinone + NADH + 5 H(+)(in) = a ubiquinol + NAD(+) + 4 H(+)(out). Functionally, core subunit of the mitochondrial membrane respiratory chain NADH dehydrogenase (Complex I) which catalyzes electron transfer from NADH through the respiratory chain, using ubiquinone as an electron acceptor. Essential for the catalytic activity and assembly of complex I. The protein is NADH-ubiquinone oxidoreductase chain 2 of Sylvisorex granti (Grant's forest shrew).